Here is a 164-residue protein sequence, read N- to C-terminus: MAGDTTITIVGNLTADPELRFTPSGAAVANFTVASTPRIYDRQTGEWKDGEALFLRCNIWREAAENVAESLTRGARVIVSGRLKQRSFETREGEKRTVIEVEVDEIGPSLRYATAKVNKASRSGGFGSGSRPAPAQTSSASGDDPWGSAPASGSFGGGDDEPPF.

Positions 1 to 110 constitute an SSB domain; sequence MAGDTTITIV…VEVDEIGPSL (110 aa). The interval 120 to 164 is disordered; that stretch reads ASRSGGFGSGSRPAPAQTSSASGDDPWGSAPASGSFGGGDDEPPF.

As to quaternary structure, homotetramer.

The sequence is that of Single-stranded DNA-binding protein (ssb) from Mycobacterium bovis (strain ATCC BAA-935 / AF2122/97).